A 379-amino-acid chain; its full sequence is Actin, cytoplasmic (379 aa).

It belongs to the actin family.

It localises to the cytoplasm. The protein localises to the cytoskeleton. It carries out the reaction ATP + H2O = ADP + phosphate + H(+). Actins are highly conserved proteins that are involved in various types of cell motility and are ubiquitously expressed in all eukaryotic cells. In Euplotes crassus, this protein is Actin, cytoplasmic.